Reading from the N-terminus, the 456-residue chain is Membrane-bound lytic murein transglycosylase F (456 aa).

A signal peptide spans 1-22 (MKTWPSRAVSLLLLALALPVGC). A non-LT domain region spans residues 23–267 (SEPPPPVRDP…ALDETWFGRF (245 aa)). The tract at residues 268–456 (GDYDYVDVAR…YRALLAAQDL (189 aa)) is LT domain. Residue E314 is part of the active site.

This sequence in the N-terminal section; belongs to the bacterial solute-binding protein 3 family. In the C-terminal section; belongs to the transglycosylase Slt family.

The protein resides in the cell outer membrane. The catalysed reaction is Exolytic cleavage of the (1-&gt;4)-beta-glycosidic linkage between N-acetylmuramic acid (MurNAc) and N-acetylglucosamine (GlcNAc) residues in peptidoglycan, from either the reducing or the non-reducing ends of the peptidoglycan chains, with concomitant formation of a 1,6-anhydrobond in the MurNAc residue.. In terms of biological role, murein-degrading enzyme that degrades murein glycan strands and insoluble, high-molecular weight murein sacculi, with the concomitant formation of a 1,6-anhydromuramoyl product. Lytic transglycosylases (LTs) play an integral role in the metabolism of the peptidoglycan (PG) sacculus. Their lytic action creates space within the PG sacculus to allow for its expansion as well as for the insertion of various structures such as secretion systems and flagella. The polypeptide is Membrane-bound lytic murein transglycosylase F (Maricaulis maris (strain MCS10) (Caulobacter maris)).